We begin with the raw amino-acid sequence, 422 residues long: MRVLVRDLKAHVGQEVELLGFLHWRRDLGRIQFLLLRDRSGVVQVVTGGLKLPLPESALRVRGLVVENAKAPGGLEVQAKEVEVLSPALEPTPVEIPKEEWRANPDTLLEYRYVTLRGEKARAPLKVQAALVRGFRRYLDRQDFTEIFTPKVVRAGAEGGSGLFGVDYFEKRAYLAQSPQLYKQIMVGVFERVYEVAPVWRMEEHHTSRHLNEYLSLDVEMGFIADEEDLMRLEEALLAEMLEEALNTAGDEIRLLGATWPSFPQDIPRLTHAEAKRILKEELGYPVGQDLSEEAERLLGEYAKERWGSDWLFVTRYPRSVRPFYTYPEEDGTTRSFDLLFRGLEITSGGQRIHRYEELLESLKAKGMDPEAFHGYLEVFKYGMPPHGGFAIGAERLTQKLLGLPNVRYARAFPRDRHRLTP.

Glutamate 158 contributes to the L-aspartate binding site. The segment at 180–183 (QLYK) is aspartate. Arginine 201 provides a ligand contact to L-aspartate. ATP contacts are provided by residues 201 to 203 (RME), 209 to 211 (RHL), and glutamate 345. The L-aspartate site is built by serine 348 and arginine 352. 393-396 (GAER) serves as a coordination point for ATP.

This sequence belongs to the class-II aminoacyl-tRNA synthetase family. Type 2 subfamily. Homodimer. Makes part of a ribonucleoprotein particle (RNP) called transamidosome that allows channelling of the aa-tRNA from non-discriminating aspartyl-tRNA synthetase active site to the GatCAB amidotransferase site. The transamidosome complex is formed by two GatCABs, one dimeric ND-AspRSs and two tRNAs(Asn) molecules.

The protein localises to the cytoplasm. The catalysed reaction is tRNA(Asx) + L-aspartate + ATP = L-aspartyl-tRNA(Asx) + AMP + diphosphate. Aspartyl-tRNA synthetase with relaxed tRNA specificity since it is able to aspartylate not only its cognate tRNA(Asp) but also tRNA(Asn) with similar efficiencies. Reaction proceeds in two steps: L-aspartate is first activated by ATP to form Asp-AMP and then transferred to the acceptor end of tRNA(Asp/Asn). This Thermus thermophilus (strain ATCC 27634 / DSM 579 / HB8) protein is Aspartate--tRNA(Asp/Asn) ligase (aspS2).